Consider the following 568-residue polypeptide: Nitrite reductase (568 aa).

Residues 1–25 form the signal peptide; the sequence is MPFGKPLVGTLLASLTLLGLATAHA. The N-terminal tail stretch occupies residues 26–54; that stretch reads KDDMKAAEQYQGAASAVDPAHVVRTNGAP. Residues 55-140 form the Cytochrome c domain; the sequence is DMSESEFNEA…AKYIQHTPPQ (86 aa). Heme c-binding residues include cysteine 72, cysteine 75, histidine 76, arginine 96, threonine 109, and methionine 113. Residues 141–568 are D1-heme domain; it reads PPEWGMPEMR…NVYNTQHDVY (428 aa). Positions 207, 250, 251, 270, 397, and 508 each coordinate heme d1.

In terms of assembly, homodimer. It depends on heme c as a cofactor. Heme serves as cofactor.

It is found in the periplasm. The enzyme catalyses nitric oxide + Fe(III)-[cytochrome c] + H2O = Fe(II)-[cytochrome c] + nitrite + 2 H(+). It carries out the reaction A + NH4(+) + H2O = hydroxylamine + AH2 + H(+). The polypeptide is Nitrite reductase (nirS) (Pseudomonas aeruginosa (strain ATCC 15692 / DSM 22644 / CIP 104116 / JCM 14847 / LMG 12228 / 1C / PRS 101 / PAO1)).